The sequence spans 175 residues: MMLYIVFILSVIFVIGFVGFSSKPSPIYGGLGLIVSGGVGCGIVLNFGGSFLGLMVFLIYLGGMMVVFGYTTAMATEQYPEIWLLNKAVLGAFITALLMEFFMVYYVLKDKEVEIVFEFNGLGDWVIYDTGDSGFFSEEAMGIAALYSYGTWLVIVTGWSLFIGVVVIMEITRGN.

5 helical membrane passes run 1-21 (MMLY…VGFS), 25-45 (SPIY…GIVL), 47-67 (FGGS…MMVV), 88-108 (AVLG…YYVL), and 149-169 (YGTW…VVIM).

The protein belongs to the complex I subunit 6 family. Core subunit of respiratory chain NADH dehydrogenase (Complex I) which is composed of 45 different subunits.

It localises to the mitochondrion inner membrane. The enzyme catalyses a ubiquinone + NADH + 5 H(+)(in) = a ubiquinol + NAD(+) + 4 H(+)(out). Its function is as follows. Core subunit of the mitochondrial membrane respiratory chain NADH dehydrogenase (Complex I) which catalyzes electron transfer from NADH through the respiratory chain, using ubiquinone as an electron acceptor. Essential for the catalytic activity and assembly of complex I. The chain is NADH-ubiquinone oxidoreductase chain 6 (MT-ND6) from Bos mutus grunniens (Wild yak).